Here is a 1182-residue protein sequence, read N- to C-terminus: uncharacterized protein (1182 aa).

A helical membrane pass occupies residues 618–638 (GSSSLVCSVMVVIFSIILYYL).

The protein resides in the host membrane. This is an uncharacterized protein from Callospermophilus lateralis (Golden-mantled ground squirrel).